A 113-amino-acid chain; its full sequence is Hydrogenase maturation factor HypA (113 aa).

His2 is a Ni(2+) binding site. Residues Cys73, Cys76, Cys89, and Cys92 each coordinate Zn(2+).

It belongs to the HypA/HybF family.

In terms of biological role, involved in the maturation of [NiFe] hydrogenases. Required for nickel insertion into the metal center of the hydrogenase. This Chlorobaculum tepidum (strain ATCC 49652 / DSM 12025 / NBRC 103806 / TLS) (Chlorobium tepidum) protein is Hydrogenase maturation factor HypA.